A 121-amino-acid polypeptide reads, in one-letter code: Group 1 truncated hemoglobin (121 aa).

N-acetylmethionine is present on Met1. A heme-binding site is contributed by His73.

The protein belongs to the truncated hemoglobin family. Group I subfamily. As to quaternary structure, monomer. It depends on heme as a cofactor.

The chain is Group 1 truncated hemoglobin from Tetrahymena thermophila.